A 279-amino-acid chain; its full sequence is Type II iodothyronine deiodinase (279 aa).

The Lumenal portion of the chain corresponds to 1–7 (MGLLSAD). The helical; Signal-anchor for type III membrane protein transmembrane segment at 8–28 (LLITLQILPVFFSNCLFLALY) threads the bilayer. Over 29–279 (DSVILLKHMV…TEDLSTDVSL (251 aa)) the chain is Cytoplasmic. The active site involves U132. Non-standard amino acids (selenocysteine) are located at U132 and U265.

It belongs to the iodothyronine deiodinase family. Predominantly monomer. Can form homodimers but homodimerization is not essential for enzyme activity. Highly expressed in liver and in various parts of the brain including telencephalon, hippocampus, cerebellum, and brain stem, and weakly expressed in thyroid, lung, and small intestine. Not detected in skeletal muscle, heart atria or ventricle, gizzard or kidney.

Its subcellular location is the endoplasmic reticulum membrane. It carries out the reaction 3,3',5-triiodo-L-thyronine + iodide + A + H(+) = L-thyroxine + AH2. The catalysed reaction is 3,3'-diiodo-L-thyronine + iodide + A + H(+) = 3,3',5'-triiodo-L-thyronine + AH2. It catalyses the reaction 3'-iodo-L-thyronine + iodide + A + H(+) = 3',5'-diiodo-L-thyronine + AH2. The enzyme catalyses 3,3'-diiodothyronamine + iodide + A + H(+) = 3,3',5'-triiodothyronamine + AH2. It carries out the reaction 3'-iodothyronamine + iodide + A + H(+) = 3',5'-diiodothyronamine + AH2. Not inhibited by N(6)-propylthiouracil. Functionally, plays a crucial role in the metabolism of thyroid hormones (TH) and has specific roles in TH activation and inactivation by deiodination. Catalyzes the deiodination of L-thyroxine (T4) to 3,5,3'-triiodothyronine (T3) and 3,3',5'-triiodothyronine (rT3) to 3,3'-diiodothyronine (3,3'-T2) via outer-ring deiodination (ORD). Catalyzes the deiodination of 3',5'-diiodothyronine (3',5'-T2) to 3'-monoiodothyronine (3'-T1) via ORD. Catalyzes the phenolic ring deiodinations of 3,3',5'-triiodothyronamine and 3',5'- diiodothyronamine. The sequence is that of Type II iodothyronine deiodinase (DIO2) from Gallus gallus (Chicken).